The primary structure comprises 202 residues: FMN reductase (NADH) RutF 1 (202 aa).

The disordered stretch occupies residues 168-202 (PRTPRSGSAPAEPARAPRAVGARPAEGPALALRSA). Residues 171 to 196 (PRSGSAPAEPARAPRAVGARPAEGPA) are compositionally biased toward low complexity.

Belongs to the non-flavoprotein flavin reductase family. RutF subfamily.

The catalysed reaction is FMNH2 + NAD(+) = FMN + NADH + 2 H(+). Catalyzes the reduction of FMN to FMNH2 which is used to reduce pyrimidine by RutA via the Rut pathway. This chain is FMN reductase (NADH) RutF 1, found in Methylorubrum extorquens (strain PA1) (Methylobacterium extorquens).